The following is a 247-amino-acid chain: MNVLSCSINTLKGLYDISGVEVGQHFYWKIGGFQVHGQVLITSWVVIAILLGSATIAVRNPQTIPTGGQNFFEYVLEFIRDVSKTQIGEEYGPWVPFIGTMFLFIFVSNWSGALLPWKIIQLPHGELAAPTNDINTTVALALLTSVAYFYAGLTKKGLGYFGKYIQPTPILLPINILEDFTKPLSLSFRLFGDILADELVVVVLVSLVPSVVPIPVMFLGLFTSGIQALIFATLAAAYIGESMEGHH.

5 helical membrane-spanning segments follow: residues Q38–V58, V95–L115, I134–T154, L199–L219, and G220–G240.

Belongs to the ATPase A chain family. F-type ATPases have 2 components, CF(1) - the catalytic core - and CF(0) - the membrane proton channel. CF(1) has five subunits: alpha(3), beta(3), gamma(1), delta(1), epsilon(1). CF(0) has four main subunits: a, b, b' and c.

The protein localises to the plastid. Its subcellular location is the chloroplast thylakoid membrane. Key component of the proton channel; it plays a direct role in the translocation of protons across the membrane. The protein is ATP synthase subunit a, chloroplastic of Panax ginseng (Korean ginseng).